Consider the following 420-residue polypeptide: ATP-dependent Clp protease ATP-binding subunit ClpX (420 aa).

One can recognise a ClpX-type ZB domain in the interval 4 to 57 (KTPGNNGKQKLFCSFCGKEQDAVKRLVAGPGVYICDECISLCNEIIAEDHEHSH). Cysteine 16, cysteine 19, cysteine 38, and cysteine 41 together coordinate Zn(2+). ATP is bound at residue 122–129 (PTGSGKTL).

The protein belongs to the ClpX chaperone family. In terms of assembly, component of the ClpX-ClpP complex. Forms a hexameric ring that, in the presence of ATP, binds to fourteen ClpP subunits assembled into a disk-like structure with a central cavity, resembling the structure of eukaryotic proteasomes.

Its function is as follows. ATP-dependent specificity component of the Clp protease. It directs the protease to specific substrates. Can perform chaperone functions in the absence of ClpP. This is ATP-dependent Clp protease ATP-binding subunit ClpX from Leptospira interrogans serogroup Icterohaemorrhagiae serovar copenhageni (strain Fiocruz L1-130).